Reading from the N-terminus, the 222-residue chain is GMP/IMP nucleotidase YrfG (222 aa).

The active-site Nucleophile is Asp9. The Mg(2+) site is built by Asp9 and Asp11. Residues Asp9–Asp11 and Lys149 contribute to the substrate site. Asp174 contributes to the Mg(2+) binding site.

It belongs to the HAD-like hydrolase superfamily. The cofactor is Mg(2+). Mn(2+) serves as cofactor. It depends on Co(2+) as a cofactor. Requires Zn(2+) as cofactor.

It carries out the reaction a ribonucleoside 5'-phosphate + H2O = a ribonucleoside + phosphate. In terms of biological role, catalyzes the dephosphorylation of different purine nucleotides (GMP and IMP). Also hydrolyzes flavin mononucleotide (FMN). The protein is GMP/IMP nucleotidase YrfG (yrfG) of Escherichia coli (strain K12).